A 710-amino-acid polypeptide reads, in one-letter code: MSDSQENKPVETPTEVKPVAEKKPAAEKKEKKPAVKKVGVMETLQTPDYVKERIEIWESLKAKHLESLKDMKEEPINVTLPDGKVVAGIKNKTTPYDIAKGISRGLADSIVSSKVNGEQIWDISRPLEADCNLQLCKFDSEEGKKTFWHSSAHILGQAMERIYGGQLCIGPATSEGFYYDMAMGDKIVSAEDYKLINEVAQKIVQEKQPFERLAVPRDIALTMFKFNKYKTEIISKIPQEDTVSLYRCGTLVDLCRGPHVPNTSYIKSFAVTKNSSAYWLGKAENDDLQRVYGISFPDKKQMEEYENFMREAALRDHRNVGKAQELFFFHPYSPGSAFFLPHGTRIYNKLVEFIREEYHRRGFTEVISPSIFSQKLWEQSGHWQKYSENMFVLPVDKDNFSLKPMNCPGHCLMFGSRQRSYRELPLRFADFGVLHRNELAGALTGLTRVRKFQQDDAHIFCTTEMIEDEINSCLGFMQYVYGIFGFEFGLELSTRPDNFLGEIAQWDIAEASLEKALNKFGKPWKLNPKDGAFYGPKIDIHITDCLKRSHQCATIQLDFQLPIRFDLEYQSDDAAELKKRPVIIHRAILGSVERMMAILIEHTGGKWPLWVSPRQAIVVTVNKTHNEYGQKVCKEISDAGFYCDIDDSDKTISKKVREAQLAQYNYILVVGQEEINGNTVNVRTRDNVVRGSLTVNDLISEFKQLVKEFK.

The disordered stretch occupies residues 1–35 (MSDSQENKPVETPTEVKPVAEKKPAAEKKEKKPAV). Basic and acidic residues predominate over residues 18–33 (PVAEKKPAAEKKEKKP). Positions 72-137 (KEEPINVTLP…EADCNLQLCK (66 aa)) constitute a TGS domain.

The protein belongs to the class-II aminoacyl-tRNA synthetase family.

It is found in the cytoplasm. The catalysed reaction is tRNA(Thr) + L-threonine + ATP = L-threonyl-tRNA(Thr) + AMP + diphosphate + H(+). The protein is Probable threonine--tRNA ligase 1, cytoplasmic (thrS1) of Dictyostelium discoideum (Social amoeba).